The primary structure comprises 459 residues: Ribulose bisphosphate carboxylase/oxygenase activase, chloroplastic (459 aa).

An ATP-binding site is contributed by 164-171 (GGKGQGKS).

Belongs to the RuBisCO activase family.

The protein localises to the plastid. Its subcellular location is the chloroplast stroma. Its function is as follows. Activation of RuBisCO (ribulose-1,5-bisphosphate carboxylase/oxygenase; EC 4.1.1.39) involves the ATP-dependent carboxylation of the epsilon-amino group of lysine leading to a carbamate structure. This is Ribulose bisphosphate carboxylase/oxygenase activase, chloroplastic from Solanum pennellii (Tomato).